A 500-amino-acid chain; its full sequence is ADP,ATP carrier protein 5 (500 aa).

A run of 11 helical transmembrane segments spans residues 26–46 (LGKF…QNIL), 62–82 (IAGF…VIIY), 94–114 (IFYY…FVIY), 149–169 (YIVY…LLFW), 184–204 (FYTL…FLMM), 224–244 (ITLV…CCLL), 287–307 (LWLL…VEAV), 328–348 (LYIL…NNVM), 357–377 (AVIS…LIVF), 381–401 (ILSL…VSIG), and 469–489 (SISP…IYAV).

It belongs to the ADP/ATP translocase tlc family.

It localises to the cell membrane. In terms of biological role, provides the rickettsial cell with host ATP in exchange for rickettsial ADP. This is an obligate exchange system. This energy acquiring activity is an important component of rickettsial parasitism. The sequence is that of ADP,ATP carrier protein 5 (tlcE) from Rickettsia prowazekii (strain Madrid E).